The sequence spans 27 residues: Pregnancy-associated glycoprotein 62 (27 aa).

This sequence belongs to the peptidase A1 family. Post-translationally, glycosylated. As to expression, placenta.

This is Pregnancy-associated glycoprotein 62 (PAG62) from Capra hircus (Goat).